Reading from the N-terminus, the 487-residue chain is Betaine aldehyde dehydrogenase (487 aa).

K(+) is bound by residues isoleucine 27 and aspartate 93. Position 149–151 (149–151 (GAW)) interacts with NAD(+). The Charge relay system role is filled by lysine 161. Residues 175 to 178 (KPSE) and 228 to 231 (SVPT) contribute to the NAD(+) site. The active-site Proton acceptor is glutamate 249. 3 residues coordinate NAD(+): glycine 251, cysteine 283, and glutamate 384. Residue cysteine 283 is the Nucleophile of the active site. The residue at position 283 (cysteine 283) is a Cysteine sulfenic acid (-SOH). Lysine 454 and glycine 457 together coordinate K(+). Catalysis depends on glutamate 461, which acts as the Charge relay system.

This sequence belongs to the aldehyde dehydrogenase family. In terms of assembly, dimer of dimers. Requires K(+) as cofactor.

It carries out the reaction betaine aldehyde + NAD(+) + H2O = glycine betaine + NADH + 2 H(+). It functions in the pathway amine and polyamine biosynthesis; betaine biosynthesis via choline pathway; betaine from betaine aldehyde: step 1/1. Functionally, involved in the biosynthesis of the osmoprotectant glycine betaine. Catalyzes the irreversible oxidation of betaine aldehyde to the corresponding acid. The chain is Betaine aldehyde dehydrogenase from Mesorhizobium japonicum (strain LMG 29417 / CECT 9101 / MAFF 303099) (Mesorhizobium loti (strain MAFF 303099)).